The chain runs to 446 residues: RUN domain-containing protein 3A (446 aa).

The interval 1 to 298 (MEASFVQTTM…LQLQLEEAAA (298 aa)) is interaction with RAP2A. Residues 52 to 189 (DDSSEEFVNF…IDFSFCLKGE (138 aa)) enclose the RUN domain. At T215 the chain carries Phosphothreonine. The disordered stretch occupies residues 216 to 239 (DEEERHSAESSTSEDNSPEHPYLP). S232 bears the Phosphoserine mark. Residues 267 to 322 (YLEELVRLRESQLKDLEAENRRLQLQLEEAAAQNQREKRELEGVILELQEQLTGLI) are a coiled coil. Residues 372-384 (PLSAEASLSSDSQ) show a composition bias toward polar residues. The disordered stretch occupies residues 372–403 (PLSAEASLSSDSQRLGEAKRDEEPWGPIGKDP). Basic and acidic residues predominate over residues 385 to 394 (RLGEAKRDEE). 2 positions are modified to phosphoserine: S416 and S419.

Belongs to the RUNDC3 family. In terms of assembly, interacts with the GTP-bound form of RAP2A. As to expression, brain.

In terms of biological role, may act as an effector of RAP2A in neuronal cells. In Mus musculus (Mouse), this protein is RUN domain-containing protein 3A (Rundc3a).